The sequence spans 400 residues: Acetate kinase (400 aa).

Residue Asn9 coordinates Mg(2+). Lys16 lines the ATP pocket. Position 90 (Arg90) interacts with substrate. The active-site Proton donor/acceptor is Asp147. Residues 207–211 (HIGNG), 282–284 (DLR), and 330–334 (GIGEN) each bind ATP. Mg(2+) is bound at residue Glu385.

The protein belongs to the acetokinase family. In terms of assembly, homodimer. The cofactor is Mg(2+). Mn(2+) serves as cofactor.

The protein localises to the cytoplasm. It catalyses the reaction acetate + ATP = acetyl phosphate + ADP. Its pathway is metabolic intermediate biosynthesis; acetyl-CoA biosynthesis; acetyl-CoA from acetate: step 1/2. Its function is as follows. Catalyzes the formation of acetyl phosphate from acetate and ATP. Can also catalyze the reverse reaction. This Staphylococcus aureus (strain JH1) protein is Acetate kinase.